The primary structure comprises 245 residues: 5-oxoprolinase subunit A (245 aa).

This sequence belongs to the LamB/PxpA family. Forms a complex composed of PxpA, PxpB and PxpC.

It carries out the reaction 5-oxo-L-proline + ATP + 2 H2O = L-glutamate + ADP + phosphate + H(+). Its function is as follows. Catalyzes the cleavage of 5-oxoproline to form L-glutamate coupled to the hydrolysis of ATP to ADP and inorganic phosphate. The chain is 5-oxoprolinase subunit A from Neisseria meningitidis serogroup C (strain 053442).